A 396-amino-acid chain; its full sequence is E3 ubiquitin-protein transferase MAEA (396 aa).

A LisH domain is found at 121 to 153 (KKKRMDRMMVEHLLRCGYYNTAVKLARQSGIED). The CTLH domain occupies 159 to 216 (MFLTAKEVEESLERQETATCLAWCHDNKSRLRKMKSCLEFSLRIQEFIELIRQNKRMD). The RING-Gid-type zinc finger occupies 314–381 (CPVCSKSLNK…QDDKVICPRT (68 aa)).

Identified in the CTLH complex that contains at least MAEA, RMND5A, GID8, WDR26, and RANBP9 and/or RANBP10 as the catalytic core. Interacts with F-actin.

The protein localises to the nucleus matrix. It localises to the cell membrane. It is found in the cytoplasm. Its subcellular location is the cytoskeleton. The catalysed reaction is S-ubiquitinyl-[E2 ubiquitin-conjugating enzyme]-L-cysteine + [acceptor protein]-L-lysine = [E2 ubiquitin-conjugating enzyme]-L-cysteine + N(6)-ubiquitinyl-[acceptor protein]-L-lysine.. Core component of the CTLH E3 ubiquitin-protein ligase complex that selectively accepts ubiquitin from UBE2H and mediates ubiquitination and subsequent proteasomal degradation of the transcription factor HBP1. MAEA and RMND5A are both required for catalytic activity of the CTLH E3 ubiquitin-protein ligase complex. MAEA is required for normal cell proliferation. The CTLH E3 ubiquitin-protein ligase complex is not required for the degradation of enzymes involved in gluconeogenesis, such as FBP1. Plays a role in erythroblast maturation and in the development of mature macrophages. Mediates the attachment of erythroid cell to mature macrophages; this MAEA-mediated contact inhibits erythroid cell apoptosis. Participates in erythroblastic island formation, which is the functional unit of definitive erythropoiesis. Associates with F-actin to regulate actin distribution in erythroblasts and macrophages. May contribute to nuclear architecture and cells division events. In Danio rerio (Zebrafish), this protein is E3 ubiquitin-protein transferase MAEA (maea).